The sequence spans 311 residues: Putative dihydroorotate dehydrogenase A (fumarate) (311 aa).

Residues Lys-45, 69 to 73 (NSMGL), and Asn-128 each bind substrate. 45–46 (KT) serves as a coordination point for FMN. Residue Asn-128 participates in FMN binding. Cys-131 functions as the Nucleophile in the catalytic mechanism. 2 residues coordinate FMN: Lys-165 and Val-193. 194-195 (NS) lines the substrate pocket. Residues Gly-220, 248 to 249 (GG), and 270 to 271 (GT) contribute to the FMN site.

This sequence belongs to the dihydroorotate dehydrogenase family. Type 1 subfamily. Homodimer. FMN serves as cofactor.

The protein localises to the cytoplasm. It catalyses the reaction (S)-dihydroorotate + fumarate = orotate + succinate. It functions in the pathway pyrimidine metabolism; UMP biosynthesis via de novo pathway. Functionally, catalyzes the conversion of dihydroorotate to orotate with fumarate as the electron acceptor. The chain is Putative dihydroorotate dehydrogenase A (fumarate) (pyrD) from Streptococcus equi subsp. equi (strain 4047).